The following is a 416-amino-acid chain: UDP-N-acetylglucosamine 1-carboxyvinyltransferase (416 aa).

22 to 23 serves as a coordination point for phosphoenolpyruvate; that stretch reads KN. Arg-92 contributes to the UDP-N-acetyl-alpha-D-glucosamine binding site. Cys-116 serves as the catalytic Proton donor. 2-(S-cysteinyl)pyruvic acid O-phosphothioketal is present on Cys-116. Residues 121 to 125, Asp-304, and Ile-326 each bind UDP-N-acetyl-alpha-D-glucosamine; that span reads RPVDQ.

The protein belongs to the EPSP synthase family. MurA subfamily.

The protein localises to the cytoplasm. It carries out the reaction phosphoenolpyruvate + UDP-N-acetyl-alpha-D-glucosamine = UDP-N-acetyl-3-O-(1-carboxyvinyl)-alpha-D-glucosamine + phosphate. It functions in the pathway cell wall biogenesis; peptidoglycan biosynthesis. In terms of biological role, cell wall formation. Adds enolpyruvyl to UDP-N-acetylglucosamine. This chain is UDP-N-acetylglucosamine 1-carboxyvinyltransferase, found in Janthinobacterium sp. (strain Marseille) (Minibacterium massiliensis).